The chain runs to 254 residues: Triosephosphate isomerase (254 aa).

Asn12 to Lys14 lines the substrate pocket. His99 functions as the Electrophile in the catalytic mechanism. Glu169 functions as the Proton acceptor in the catalytic mechanism. Substrate contacts are provided by residues Gly175, Ser214, and Gly235 to Gly236.

This sequence belongs to the triosephosphate isomerase family. Homodimer.

Its subcellular location is the cytoplasm. The catalysed reaction is D-glyceraldehyde 3-phosphate = dihydroxyacetone phosphate. The protein operates within carbohydrate biosynthesis; gluconeogenesis. It participates in carbohydrate degradation; glycolysis; D-glyceraldehyde 3-phosphate from glycerone phosphate: step 1/1. Functionally, involved in the gluconeogenesis. Catalyzes stereospecifically the conversion of dihydroxyacetone phosphate (DHAP) to D-glyceraldehyde-3-phosphate (G3P). This Bartonella quintana (strain Toulouse) (Rochalimaea quintana) protein is Triosephosphate isomerase.